Here is a 300-residue protein sequence, read N- to C-terminus: Ribosomal RNA small subunit methyltransferase A (300 aa).

S-adenosyl-L-methionine contacts are provided by Asn36, Val38, Gly63, Glu84, Asp113, and Asn131.

Belongs to the class I-like SAM-binding methyltransferase superfamily. rRNA adenine N(6)-methyltransferase family. RsmA subfamily.

It is found in the cytoplasm. It carries out the reaction adenosine(1518)/adenosine(1519) in 16S rRNA + 4 S-adenosyl-L-methionine = N(6)-dimethyladenosine(1518)/N(6)-dimethyladenosine(1519) in 16S rRNA + 4 S-adenosyl-L-homocysteine + 4 H(+). In terms of biological role, specifically dimethylates two adjacent adenosines (A1518 and A1519) in the loop of a conserved hairpin near the 3'-end of 16S rRNA in the 30S particle. May play a critical role in biogenesis of 30S subunits. The polypeptide is Ribosomal RNA small subunit methyltransferase A (Kineococcus radiotolerans (strain ATCC BAA-149 / DSM 14245 / SRS30216)).